The following is a 423-amino-acid chain: Glutamate-1-semialdehyde 2,1-aminomutase (423 aa).

The residue at position 258 (Lys258) is an N6-(pyridoxal phosphate)lysine.

The protein belongs to the class-III pyridoxal-phosphate-dependent aminotransferase family. HemL subfamily. The cofactor is pyridoxal 5'-phosphate.

Its subcellular location is the cytoplasm. The catalysed reaction is (S)-4-amino-5-oxopentanoate = 5-aminolevulinate. The protein operates within porphyrin-containing compound metabolism; protoporphyrin-IX biosynthesis; 5-aminolevulinate from L-glutamyl-tRNA(Glu): step 2/2. This chain is Glutamate-1-semialdehyde 2,1-aminomutase, found in Pyrobaculum arsenaticum (strain DSM 13514 / JCM 11321 / PZ6).